A 256-amino-acid polypeptide reads, in one-letter code: uncharacterized protein (256 aa).

4 helical membrane-spanning segments follow: residues Phe5–Leu25, Ile30–Phe50, Val64–Ile84, and Val105–Ile125. The disordered stretch occupies residues Glu198 to Ser256. Residues Leu203–Lys215 show a composition bias toward low complexity. Phosphoserine occurs at positions 210 and 211.

The protein localises to the endoplasmic reticulum membrane. The protein resides in the nucleus membrane. This is an uncharacterized protein from Schizosaccharomyces pombe (strain 972 / ATCC 24843) (Fission yeast).